Consider the following 417-residue polypeptide: Tyrosine--tRNA ligase (417 aa).

Residue Y35 coordinates L-tyrosine. A 'HIGH' region motif is present at residues A40–H49. Positions 165 and 169 each coordinate L-tyrosine. The 'KMSKS' region motif lies at K229–S233. Residue K232 participates in ATP binding. The 67-residue stretch at I350–F416 folds into the S4 RNA-binding domain.

This sequence belongs to the class-I aminoacyl-tRNA synthetase family. TyrS type 1 subfamily. As to quaternary structure, homodimer.

It localises to the cytoplasm. The catalysed reaction is tRNA(Tyr) + L-tyrosine + ATP = L-tyrosyl-tRNA(Tyr) + AMP + diphosphate + H(+). Catalyzes the attachment of tyrosine to tRNA(Tyr) in a two-step reaction: tyrosine is first activated by ATP to form Tyr-AMP and then transferred to the acceptor end of tRNA(Tyr). This is Tyrosine--tRNA ligase from Phytoplasma mali (strain AT).